We begin with the raw amino-acid sequence, 307 residues long: Haloalkane dehalogenase (307 aa).

Residues Pro34–Gly158 enclose the AB hydrolase-1 domain. Asp106 functions as the Nucleophile in the catalytic mechanism. The Proton donor role is filled by Glu130. His272 functions as the Proton acceptor in the catalytic mechanism.

It belongs to the haloalkane dehalogenase family. Type 2 subfamily. As to quaternary structure, monomer.

The catalysed reaction is 1-haloalkane + H2O = a halide anion + a primary alcohol + H(+). The protein operates within xenobiotic degradation; 1,2-dibromoethane degradation. Catalyzes hydrolytic cleavage of carbon-halogen bonds in halogenated aliphatic compounds, leading to the formation of the corresponding primary alcohols, halide ions and protons. Has a broad substrate specificity, which includes mono- and di-chlorinated and brominated alkanes. The highest activity was found with 1,2-dibromoethane, whereas low activity was measured with the analog 1,2-dichloroethane. The chain is Haloalkane dehalogenase (dhaAF) from Mycobacterium sp. (strain GP1).